The chain runs to 54 residues: DCSQDCAACSILARPAELNTETCILECEGKLSSNDTEGGLCKEFLHPSKVDLPR.

3 cysteine pairs are disulfide-bonded: cysteine 2–cysteine 23, cysteine 6–cysteine 27, and cysteine 9–cysteine 41.

It belongs to the opioid neuropeptide precursor family. In terms of assembly, member of a multiprotein complex. Salivary gland.

The protein localises to the secreted. Its function is as follows. Paralytic toxin that immobilizes a mealworm for 7 days. Inhibits the transient receptor potential cation channel subfamily V member 6 (TRPV6). The chain is Soricidin from Blarina brevicauda (Northern short-tailed shrew).